A 569-amino-acid polypeptide reads, in one-letter code: 3-oxosteroid 1-dehydrogenase (569 aa).

Residue 10 to 39 participates in FAD binding; the sequence is DVVVVGSGAAGMVAALTAAHQGLSTVVVEK. The tract at residues 127-148 is disordered; that stretch reads PGGKPTGRSVEPKPFDANKLGP.

It belongs to the FAD-dependent oxidoreductase 2 family. 3-oxosteroid dehydrogenase subfamily. The cofactor is FAD.

It carries out the reaction a 3-oxosteroid + A = a 3-oxo-Delta(1)-steroid + AH2. The catalysed reaction is a 3-oxo-Delta(4)-steroid + A = a 3-oxo-Delta(1,4)-steroid + AH2. In terms of biological role, catalyzes the elimination of the C-1 and C-2 hydrogen atoms of the A-ring from the polycyclic ring structure of 3-ketosteroids. Is also involved in the formation of 1,4-androstadiene-3,17-dione (ADD) from 4-androstene-3,17-dione (AD) to. The polypeptide is 3-oxosteroid 1-dehydrogenase (ksdD) (Mycolicibacterium smegmatis (strain ATCC 700084 / mc(2)155) (Mycobacterium smegmatis)).